Reading from the N-terminus, the 261-residue chain is (3R)-3-hydroxyacyl-CoA dehydrogenase (261 aa).

NAD(+) is bound by residues 15-23 (LVTGAGSGI) and 42-43 (DL). Position 60 is a phosphoserine (serine 60). Residue 74–76 (ADV) coordinates NAD(+). Serine 156 provides a ligand contact to substrate. N6-succinyllysine is present on lysine 160. Residue tyrosine 169 is the Proton acceptor of the active site. Residues 169–173 (YAASK) and 202–204 (IAT) contribute to the NAD(+) site. Lysine 173 carries the post-translational modification N6-succinyllysine.

This sequence belongs to the short-chain dehydrogenases/reductases (SDR) family. Heterotetramer with CBR4; contains two molecules of HSD17B8 and CBR4. In terms of tissue distribution, widely expressed, particularly abundant in prostate, placenta and kidney. Expressed at protein level in various tissues like brain, cerebellum, heart, lung, kidney, ovary, testis, adrenals and prostate.

The protein localises to the mitochondrion matrix. The enzyme catalyses a (3R)-3-hydroxyacyl-CoA + NAD(+) = a 3-oxoacyl-CoA + NADH + H(+). It catalyses the reaction 17beta-estradiol + NAD(+) = estrone + NADH + H(+). It carries out the reaction testosterone + NAD(+) = androst-4-ene-3,17-dione + NADH + H(+). The catalysed reaction is 17beta-hydroxy-5alpha-androstan-3-one + NAD(+) = 5alpha-androstan-3,17-dione + NADH + H(+). It participates in steroid biosynthesis; estrogen biosynthesis. The protein operates within lipid metabolism; fatty acid biosynthesis. It functions in the pathway lipid metabolism; mitochondrial fatty acid beta-oxidation. Functionally, required for the solubility and assembly of the heterotetramer 3-ketoacyl-[acyl carrier protein] (ACP) reductase functional complex (KAR or KAR1) that forms part of the mitochondrial fatty acid synthase (mtFAS). Alpha-subunit of the KAR complex that acts as a scaffold protein required for the stability of carbonyl reductase type-4 (CBR4, beta-subunit of the KAR complex) and for its 3-ketoacyl-ACP reductase activity, thereby participating in mitochondrial fatty acid biosynthesis. Catalyzes the NAD-dependent conversion of (3R)-3-hydroxyacyl-CoA into 3-ketoacyl-CoA (3-oxoacyl-CoA) with no chain length preference; this enzymatic activity is not needed for the KAR function. Prefers (3R)-3-hydroxyacyl-CoA over (3S)-3-hydroxyacyl-CoA and displays enzymatic activity only in the presence of NAD(+). Cooperates with enoyl-CoA hydratase 1 in mitochondria, together they constitute an alternative route to the auxiliary enzyme pathways for the breakdown of Z-PUFA (cis polyunsaturated fatty acid) enoyl-esters. NAD-dependent 17-beta-hydroxysteroid dehydrogenase with highest activity towards estradiol (17beta-estradiol or E2). Has very low activity towards testosterone and dihydrotestosterone (17beta-hydroxy-5alpha-androstan-3-one). Primarily an oxidative enzyme, it can switch to a reductive mode determined in the appropriate physiologic milieu and catalyze the reduction of estrone (E1) to form biologically active 17beta-estradiol. The sequence is that of (3R)-3-hydroxyacyl-CoA dehydrogenase (HSD17B8) from Homo sapiens (Human).